The following is a 490-amino-acid chain: UDP-N-acetylmuramoyl-L-alanyl-D-glutamate--2,6-diaminopimelate ligase (490 aa).

UDP-N-acetyl-alpha-D-muramoyl-L-alanyl-D-glutamate is bound by residues Leu22, Ser24, and 39–41; that span reads HQT. Residue 111 to 117 coordinates ATP; sequence GTNGKTT. UDP-N-acetyl-alpha-D-muramoyl-L-alanyl-D-glutamate-binding positions include Asn152, 153–154, Ser180, Gln186, and Arg188; that span reads TT. An N6-carboxylysine modification is found at Lys220. Meso-2,6-diaminopimelate-binding positions include Arg385, 409–412, Gly460, and Glu464; that span reads DNPR. Residues 409–412 carry the Meso-diaminopimelate recognition motif motif; the sequence is DNPR.

This sequence belongs to the MurCDEF family. MurE subfamily. Requires Mg(2+) as cofactor. Post-translationally, carboxylation is probably crucial for Mg(2+) binding and, consequently, for the gamma-phosphate positioning of ATP.

The protein resides in the cytoplasm. It carries out the reaction UDP-N-acetyl-alpha-D-muramoyl-L-alanyl-D-glutamate + meso-2,6-diaminopimelate + ATP = UDP-N-acetyl-alpha-D-muramoyl-L-alanyl-gamma-D-glutamyl-meso-2,6-diaminopimelate + ADP + phosphate + H(+). It functions in the pathway cell wall biogenesis; peptidoglycan biosynthesis. Catalyzes the addition of meso-diaminopimelic acid to the nucleotide precursor UDP-N-acetylmuramoyl-L-alanyl-D-glutamate (UMAG) in the biosynthesis of bacterial cell-wall peptidoglycan. This Yersinia pestis protein is UDP-N-acetylmuramoyl-L-alanyl-D-glutamate--2,6-diaminopimelate ligase.